A 95-amino-acid polypeptide reads, in one-letter code: Cobalt transport protein CbiN (95 aa).

2 helical membrane passes run 5-25 and 67-87; these read HILMLLAVIIISVAPLIIYSG and LLFALQAAIGALIIGYVFGYY.

It belongs to the CbiN family. As to quaternary structure, forms an energy-coupling factor (ECF) transporter complex composed of an ATP-binding protein (A component, CbiO), a transmembrane protein (T component, CbiQ) and 2 possible substrate-capture proteins (S components, CbiM and CbiN) of unknown stoichimetry.

The protein resides in the cell membrane. It functions in the pathway cofactor biosynthesis; adenosylcobalamin biosynthesis. Its function is as follows. Part of the energy-coupling factor (ECF) transporter complex CbiMNOQ involved in cobalt import. This is Cobalt transport protein CbiN from Methanothermobacter thermautotrophicus (strain ATCC 29096 / DSM 1053 / JCM 10044 / NBRC 100330 / Delta H) (Methanobacterium thermoautotrophicum).